An 85-amino-acid polypeptide reads, in one-letter code: MKLINIGFGNMVVSSRIVAIISPDSAPIKRFLSDAKTRNELIDATYGRKTRAVLVLDSGHIVLSALHPETIAARIEGGDKEEESS.

The protein belongs to the RemA family.

This chain is Putative regulatory protein Dtur_1444, found in Dictyoglomus turgidum (strain DSM 6724 / Z-1310).